We begin with the raw amino-acid sequence, 598 residues long: Vanadium-dependent bromoperoxidase (598 aa).

Ca(2+) contacts are provided by F361, Q363, D365, D368, and Q370. 2 residues coordinate vanadate: K400 and R408. Residue H480 is part of the active site. Vanadate is bound by residues S485, G486, H487, R547, and H553. The active site involves H487.

The protein belongs to the vanadium-dependent haloperoxidase family. Homododecamer. It depends on Ca(2+) as a cofactor. Vanadate is required as a cofactor.

The enzyme catalyses RH + Br(-) + H2O2 = RBr + 2 H2O.. In terms of biological role, catalyzes the halogenation of organic substrates in the presence of hydrogen peroxide. This is Vanadium-dependent bromoperoxidase from Corallina pilulifera (Red coralline alga).